A 413-amino-acid polypeptide reads, in one-letter code: uncharacterized protein (413 aa).

The N-terminal stretch at 1 to 22 (MKKSKASALLWLFSLVGFMLHA) is a signal peptide.

Its subcellular location is the periplasm. In terms of biological role, may be involved in ulvan degradation. Ulvan is the main polysaccharide component of the Ulvales (green seaweed) cell wall. It is composed of disaccharide building blocks comprising 3-sulfated rhamnose (Rha3S) linked to D-glucuronic acid (GlcA), L-iduronic acid (IduA), or D-xylose (Xyl). This is an uncharacterized protein from Formosa agariphila (strain DSM 15362 / KCTC 12365 / LMG 23005 / KMM 3901 / M-2Alg 35-1).